Reading from the N-terminus, the 62-residue chain is MGIKPSYIKNLGEELIVKHRDRFSGDFEENKHAVAEVAVIDSKTVRNRVAGYISRKINTRKR.

It belongs to the eukaryotic ribosomal protein eS17 family.

In Methanoculleus marisnigri (strain ATCC 35101 / DSM 1498 / JR1), this protein is Small ribosomal subunit protein eS17.